The sequence spans 409 residues: Alpha-1-antitrypsin (409 aa).

The N-terminal stretch at 1–15 (LLLAGLCCLLPGSLA) is a signal peptide. Residues 18-39 (PQGDAAQKTDTPPHDQNHPTLN) form a disordered region. N-linked (GlcNAc...) asparagine glycans are attached at residues Asn61, Asn98, Asn136, and Asn262. The interval 364–383 (GAMFLEAIPMSIPPEVKFNK) is RCL. Residue Ser374 is modified to Phosphoserine.

It belongs to the serpin family. As to quaternary structure, interacts with CELA2A. Interacts with ERGIC3 and LMAN1/ERGIC53. Interacts with PRSS1/Trypsin. In terms of tissue distribution, plasma.

The protein localises to the secreted. Inhibitor of serine proteases. Its primary target is elastase, but it also has a moderate affinity for plasmin and thrombin. Inhibits trypsin, chymotrypsin and plasminogen activator. This Papio anubis (Olive baboon) protein is Alpha-1-antitrypsin (SERPINA1).